The following is a 633-amino-acid chain: Lysophospholipase 1 (633 aa).

An N-terminal signal peptide occupies residues 1-20; the sequence is MKTTTVACAVAGLLFSCVSG. The PLA2c domain maps to 47-594; the sequence is GCPASRPTIR…QRYCWDGSLN (548 aa). N-linked (GlcNAc...) asparagine glycans are attached at residues Asn-64, Asn-104, Asn-139, Asn-173, Asn-246, Asn-290, Asn-329, Asn-358, Asn-397, Asn-450, Asn-463, Asn-469, Asn-497, Asn-500, Asn-521, Asn-549, Asn-555, and Asn-594. Ser-609 is lipidated: GPI-like-anchor amidated serine. Positions 610 to 633 are cleaved as a propeptide — removed in mature form; it reads AASGIIPSISTVAMAVVFAAWTIF.

Belongs to the lysophospholipase family. Post-translationally, the GPI-like anchor contains a phosphoceramide lipid group. The anchor position has not been determined.

It localises to the cell membrane. The enzyme catalyses a 1-acyl-sn-glycero-3-phosphocholine + H2O = sn-glycerol 3-phosphocholine + a fatty acid + H(+). Catalyzes the release of fatty acids from lysophospholipids. In Aspergillus fumigatus (strain CBS 144.89 / FGSC A1163 / CEA10) (Neosartorya fumigata), this protein is Lysophospholipase 1 (plb1).